We begin with the raw amino-acid sequence, 285 residues long: NAD kinase (285 aa).

The active-site Proton acceptor is the D66. Residues 66-67 (DG), 137-138 (ND), R148, R165, D167, and 178-183 (TAYSMS) contribute to the NAD(+) site.

Belongs to the NAD kinase family. It depends on a divalent metal cation as a cofactor.

It localises to the cytoplasm. The enzyme catalyses NAD(+) + ATP = ADP + NADP(+) + H(+). Involved in the regulation of the intracellular balance of NAD and NADP, and is a key enzyme in the biosynthesis of NADP. Catalyzes specifically the phosphorylation on 2'-hydroxyl of the adenosine moiety of NAD to yield NADP. The chain is NAD kinase from Chlorobium phaeobacteroides (strain DSM 266 / SMG 266 / 2430).